Here is a 251-residue protein sequence, read N- to C-terminus: E3 ubiquitin-protein ligase Os06g0535400 (251 aa).

Helical transmembrane passes span 28–48 (VVAA…YCFA), 102–122 (LANR…IVVF), and 127–147 (ADVV…VWLS). The RING-type; atypical zinc finger occupies 185–227 (CCVCLAGMREAQALRDLPRCGHRFHAKCIGKWLTAHPTCPVCR).

The protein resides in the membrane. It catalyses the reaction S-ubiquitinyl-[E2 ubiquitin-conjugating enzyme]-L-cysteine + [acceptor protein]-L-lysine = [E2 ubiquitin-conjugating enzyme]-L-cysteine + N(6)-ubiquitinyl-[acceptor protein]-L-lysine.. It participates in protein modification; protein ubiquitination. In terms of biological role, possesses E3 ubiquitin-protein ligase in vitro. The chain is E3 ubiquitin-protein ligase Os06g0535400 from Oryza sativa subsp. japonica (Rice).